Here is a 510-residue protein sequence, read N- to C-terminus: Cytochrome P450 705A20 (510 aa).

The helical transmembrane segment at 7–27 (QHCFSFILLCFFSLLCYSLLF) threads the bilayer.

The protein belongs to the cytochrome P450 family. Requires heme as cofactor.

The protein resides in the membrane. This Arabidopsis thaliana (Mouse-ear cress) protein is Cytochrome P450 705A20 (CYP705A20).